Consider the following 285-residue polypeptide: tRNA pseudouridine synthase B (285 aa).

The active-site Nucleophile is the Asp-38.

Belongs to the pseudouridine synthase TruB family. Type 1 subfamily.

It catalyses the reaction uridine(55) in tRNA = pseudouridine(55) in tRNA. Responsible for synthesis of pseudouridine from uracil-55 in the psi GC loop of transfer RNAs. The protein is tRNA pseudouridine synthase B of Geobacillus kaustophilus (strain HTA426).